The sequence spans 516 residues: Pickpocket protein 11 (516 aa).

2 consecutive transmembrane segments (helical) span residues 117-137 (ILWWLLICNAVLLSFTLVIMS) and 454-474 (FIGTFGGITGLFMGCSFVSVF).

This sequence belongs to the amiloride-sensitive sodium channel (TC 1.A.6) family. In terms of tissue distribution, expressed in embryonic and larval tracheal systems in the dorsal trunk and transverse connective (TC), but not in the junction between the dorsal trunk and TC, and in several tracheal branches and terminal cells. In larvae, also expressed in ventral pits. Expressed in the taste-sensing terminal organ of the larval head. In adult, expressed in hairs on the tibia, femur, tarsi of the leg and wing margin.

It is found in the membrane. Its function is as follows. Part of a complex that plays a role in tracheal liquid clearance. In both larvae and adults, contributes to the behavioral response to salt. Probable role in sodium transport. This chain is Pickpocket protein 11 (ppk11), found in Drosophila melanogaster (Fruit fly).